The chain runs to 304 residues: UDP-3-O-acyl-N-acetylglucosamine deacetylase (304 aa).

Zn(2+) contacts are provided by H78, H237, and D241. Catalysis depends on H264, which acts as the Proton donor.

Belongs to the LpxC family. Requires Zn(2+) as cofactor.

It catalyses the reaction a UDP-3-O-[(3R)-3-hydroxyacyl]-N-acetyl-alpha-D-glucosamine + H2O = a UDP-3-O-[(3R)-3-hydroxyacyl]-alpha-D-glucosamine + acetate. Its pathway is glycolipid biosynthesis; lipid IV(A) biosynthesis; lipid IV(A) from (3R)-3-hydroxytetradecanoyl-[acyl-carrier-protein] and UDP-N-acetyl-alpha-D-glucosamine: step 2/6. Catalyzes the hydrolysis of UDP-3-O-myristoyl-N-acetylglucosamine to form UDP-3-O-myristoylglucosamine and acetate, the committed step in lipid A biosynthesis. This is UDP-3-O-acyl-N-acetylglucosamine deacetylase from Polynucleobacter necessarius subsp. necessarius (strain STIR1).